A 416-amino-acid chain; its full sequence is Gamma-glutamyl phosphate reductase (416 aa).

It belongs to the gamma-glutamyl phosphate reductase family.

It localises to the cytoplasm. The enzyme catalyses L-glutamate 5-semialdehyde + phosphate + NADP(+) = L-glutamyl 5-phosphate + NADPH + H(+). It participates in amino-acid biosynthesis; L-proline biosynthesis; L-glutamate 5-semialdehyde from L-glutamate: step 2/2. Functionally, catalyzes the NADPH-dependent reduction of L-glutamate 5-phosphate into L-glutamate 5-semialdehyde and phosphate. The product spontaneously undergoes cyclization to form 1-pyrroline-5-carboxylate. This Petrotoga mobilis (strain DSM 10674 / SJ95) protein is Gamma-glutamyl phosphate reductase.